Reading from the N-terminus, the 1939-residue chain is Myosin-1 (1939 aa).

A Myosin N-terminal SH3-like domain is found at 33 to 82 (DAKTSVFVAEPKESFVKGTVQSREGGKVTVKTEAGATLTVKEDQVFPMNP). Phosphothreonine is present on residues Thr-64 and Thr-69. The region spanning 86 to 782 (DKIEDMAMMT…LLGLLEEMRD (697 aa)) is the Myosin motor domain. Lys-130 carries the N6,N6,N6-trimethyllysine modification. Residue 179-186 (GESGAGKT) participates in ATP binding. Phosphotyrosine is present on Tyr-389. Ser-392 bears the Phosphoserine mark. A Phosphothreonine modification is found at Thr-419. Tyr-424 carries the post-translational modification Phosphotyrosine. The residue at position 625 (Ser-625) is a Phosphoserine. The interval 659 to 681 (LNKLMTNLRSTHPHFVRCIIPNE) is actin-binding. A Pros-methylhistidine modification is found at His-757. Residues 761–775 (KFGHTKVFFKAGLLG) form an actin-binding region. The IQ domain maps to 785 to 814 (LAQLITRTQARCRGFLARVEYQKMVERRES). Residues 843-1939 (LLKSAETEKE…EVHTKIISEE (1097 aa)) are a coiled coil. Phosphoserine is present on residues Ser-1092 and Ser-1096. Disordered stretches follow at residues 1125–1147 (EIEA…SREL) and 1153–1172 (RLEE…KKRE). Positions 1128-1147 (AERASRAKAEKQRSDLSREL) are enriched in basic and acidic residues. A phosphoserine mark is found at Ser-1162 and Ser-1237. Residue Thr-1241 is modified to Phosphothreonine. Ser-1243 is subject to Phosphoserine. The residue at position 1255 (Thr-1255) is a Phosphothreonine. A Phosphoserine modification is found at Ser-1261. Thr-1265 and Thr-1286 each carry phosphothreonine. Residues Ser-1288, Ser-1292, Ser-1303, and Ser-1306 each carry the phosphoserine modification. Position 1464 is a phosphotyrosine (Tyr-1464). Thr-1467 is modified (phosphothreonine). Ser-1474 is modified (phosphoserine). Phosphotyrosine is present on Tyr-1492. Position 1495 is a phosphoserine (Ser-1495). A Phosphothreonine modification is found at Thr-1501. Ser-1514 is modified (phosphoserine). Phosphothreonine is present on Thr-1517. Residues Ser-1554, Ser-1574, Ser-1600, Ser-1603, Ser-1714, and Ser-1726 each carry the phosphoserine modification. Thr-1730 and Thr-1736 each carry phosphothreonine. The residue at position 1739 (Ser-1739) is a Phosphoserine.

It belongs to the TRAFAC class myosin-kinesin ATPase superfamily. Myosin family. In terms of assembly, muscle myosin is a hexameric protein that consists of 2 heavy chain subunits (MHC), 2 alkali light chain subunits (MLC) and 2 regulatory light chain subunits (MLC-2). Interacts with SLC26A5.

Its subcellular location is the cytoplasm. It localises to the myofibril. Functionally, required for normal hearing. It plays a role in cochlear amplification of auditory stimuli, likely through the positive regulation of prestin (SLC26A5) activity and outer hair cell (OHC) electromotility. This chain is Myosin-1 (MYH1), found in Canis lupus familiaris (Dog).